An 82-amino-acid chain; its full sequence is Exodeoxyribonuclease 7 small subunit (82 aa).

The protein belongs to the XseB family. Heterooligomer composed of large and small subunits.

The protein resides in the cytoplasm. It catalyses the reaction Exonucleolytic cleavage in either 5'- to 3'- or 3'- to 5'-direction to yield nucleoside 5'-phosphates.. In terms of biological role, bidirectionally degrades single-stranded DNA into large acid-insoluble oligonucleotides, which are then degraded further into small acid-soluble oligonucleotides. This chain is Exodeoxyribonuclease 7 small subunit, found in Mycobacterium avium (strain 104).